The primary structure comprises 530 residues: Chitin synthase 1 (530 aa).

N-linked (GlcNAc...) asparagine glycosylation is present at asparagine 17. Residues 22–94 (QESSSNLIQQ…QANNNRKVTR (73 aa)) form a disordered region. Positions 24-56 (SSSNLIQQQQPGTNYARNQQTLSSLRSQKQQAE) are enriched in polar residues. 3 N-linked (GlcNAc...) asparagine glycosylation sites follow: asparagine 118, asparagine 310, and asparagine 474. 2 helical membrane passes run 477–497 (FFAG…GHGF) and 508–528 (IYNV…LSFL).

Belongs to the chitin synthase family. Class II subfamily.

The protein resides in the cell membrane. The catalysed reaction is [(1-&gt;4)-N-acetyl-beta-D-glucosaminyl](n) + UDP-N-acetyl-alpha-D-glucosamine = [(1-&gt;4)-N-acetyl-beta-D-glucosaminyl](n+1) + UDP + H(+). Polymerizes chitin, a structural polymer of the cell wall and septum, by transferring the sugar moiety of UDP-GlcNAc to the non-reducing end of the growing chitin polymer. This Rhizopus delemar (strain RA 99-880 / ATCC MYA-4621 / FGSC 9543 / NRRL 43880) (Mucormycosis agent) protein is Chitin synthase 1.